The following is a 528-amino-acid chain: Phosphoenolpyruvate carboxykinase (ATP) (528 aa).

Arg56, Tyr192, and Lys198 together coordinate substrate. Residues Lys198, His217, and 233–241 (GLSGTGKTT) contribute to the ATP site. Lys198 and His217 together coordinate Mn(2+). Asp254 contacts Mn(2+). ATP-binding residues include Glu282, Arg319, and Thr444. Residue Arg319 coordinates substrate.

This sequence belongs to the phosphoenolpyruvate carboxykinase (ATP) family. Mn(2+) is required as a cofactor.

The protein resides in the cytoplasm. The catalysed reaction is oxaloacetate + ATP = phosphoenolpyruvate + ADP + CO2. The protein operates within carbohydrate biosynthesis; gluconeogenesis. Involved in the gluconeogenesis. Catalyzes the conversion of oxaloacetate (OAA) to phosphoenolpyruvate (PEP) through direct phosphoryl transfer between the nucleoside triphosphate and OAA. This Geobacillus kaustophilus (strain HTA426) protein is Phosphoenolpyruvate carboxykinase (ATP).